The chain runs to 228 residues: Cytochrome b6-f complex iron-sulfur subunit 2, chloroplastic (228 aa).

The transit peptide at 1-49 (MASSTLSPVTQLCSSKSGLSSVSQCLLLKPMKINSHGLGKDKRMKVKCM) directs the protein to the chloroplast. A helical membrane pass occupies residues 71–91 (LLLGALSLPTAGMLVPYATFF). Residues 115 to 211 (ASEWLKTHPP…ADIDDGKVVF (97 aa)) form the Rieske domain. [2Fe-2S] cluster contacts are provided by Cys157, His159, Cys175, and His178. A disulfide bridge connects residues Cys162 and Cys177.

It belongs to the Rieske iron-sulfur protein family. The 4 large subunits of the cytochrome b6-f complex are cytochrome b6, subunit IV (17 kDa polypeptide, petD), cytochrome f and the Rieske protein, while the 4 small subunits are petG, petL, petM and petN. The complex functions as a dimer. The cofactor is [2Fe-2S] cluster.

Its subcellular location is the plastid. It localises to the chloroplast thylakoid membrane. The enzyme catalyses 2 oxidized [plastocyanin] + a plastoquinol + 2 H(+)(in) = 2 reduced [plastocyanin] + a plastoquinone + 4 H(+)(out). Its function is as follows. Component of the cytochrome b6-f complex, which mediates electron transfer between photosystem II (PSII) and photosystem I (PSI), cyclic electron flow around PSI, and state transitions. In Nicotiana tabacum (Common tobacco), this protein is Cytochrome b6-f complex iron-sulfur subunit 2, chloroplastic (petC2).